A 66-amino-acid chain; its full sequence is Neurotoxin-like protein STR1 (66 aa).

The LCN-type CS-alpha/beta domain occupies 2–65; that stretch reads RDGYIVHDGT…VWGEDGFMCW (64 aa). 4 disulfide bridges follow: C13–C64, C17–C40, C26–C45, and C30–C47.

The protein belongs to the long (4 C-C) scorpion toxin superfamily. Sodium channel inhibitor family. Beta subfamily. In terms of tissue distribution, expressed by the venom gland.

It is found in the secreted. In terms of biological role, this protein is not toxic. The polypeptide is Neurotoxin-like protein STR1 (Androctonus australis (Sahara scorpion)).